Consider the following 498-residue polypeptide: ATP synthase subunit beta, chloroplastic (498 aa).

172 to 179 (GGAGVGKT) contacts ATP.

The protein belongs to the ATPase alpha/beta chains family. In terms of assembly, F-type ATPases have 2 components, CF(1) - the catalytic core - and CF(0) - the membrane proton channel. CF(1) has five subunits: alpha(3), beta(3), gamma(1), delta(1), epsilon(1). CF(0) has four main subunits: a(1), b(1), b'(1) and c(9-12).

Its subcellular location is the plastid. It is found in the chloroplast thylakoid membrane. It carries out the reaction ATP + H2O + 4 H(+)(in) = ADP + phosphate + 5 H(+)(out). Functionally, produces ATP from ADP in the presence of a proton gradient across the membrane. The catalytic sites are hosted primarily by the beta subunits. The polypeptide is ATP synthase subunit beta, chloroplastic (Atropa belladonna (Belladonna)).